A 53-amino-acid polypeptide reads, in one-letter code: Large ribosomal subunit protein eL40 (53 aa).

This sequence belongs to the eukaryotic ribosomal protein eL40 family.

This is Large ribosomal subunit protein eL40 from Staphylothermus marinus (strain ATCC 43588 / DSM 3639 / JCM 9404 / F1).